The sequence spans 224 residues: Phosphoribosylformylglycinamidine synthase subunit PurQ (224 aa).

In terms of domain architecture, Glutamine amidotransferase type-1 spans 4-224 (RIGVVTFPGT…YSALDAVLTG (221 aa)). Cysteine 87 serves as the catalytic Nucleophile. Catalysis depends on residues histidine 195 and glutamate 197.

As to quaternary structure, part of the FGAM synthase complex composed of 1 PurL, 1 PurQ and 2 PurS subunits.

Its subcellular location is the cytoplasm. It carries out the reaction N(2)-formyl-N(1)-(5-phospho-beta-D-ribosyl)glycinamide + L-glutamine + ATP + H2O = 2-formamido-N(1)-(5-O-phospho-beta-D-ribosyl)acetamidine + L-glutamate + ADP + phosphate + H(+). The enzyme catalyses L-glutamine + H2O = L-glutamate + NH4(+). It participates in purine metabolism; IMP biosynthesis via de novo pathway; 5-amino-1-(5-phospho-D-ribosyl)imidazole from N(2)-formyl-N(1)-(5-phospho-D-ribosyl)glycinamide: step 1/2. In terms of biological role, part of the phosphoribosylformylglycinamidine synthase complex involved in the purines biosynthetic pathway. Catalyzes the ATP-dependent conversion of formylglycinamide ribonucleotide (FGAR) and glutamine to yield formylglycinamidine ribonucleotide (FGAM) and glutamate. The FGAM synthase complex is composed of three subunits. PurQ produces an ammonia molecule by converting glutamine to glutamate. PurL transfers the ammonia molecule to FGAR to form FGAM in an ATP-dependent manner. PurS interacts with PurQ and PurL and is thought to assist in the transfer of the ammonia molecule from PurQ to PurL. This Mycobacterium bovis (strain ATCC BAA-935 / AF2122/97) protein is Phosphoribosylformylglycinamidine synthase subunit PurQ.